The sequence spans 485 residues: UDP-N-acetylmuramoyl-L-alanyl-D-glutamate--2,6-diaminopimelate ligase (485 aa).

Residue serine 30 participates in UDP-N-acetyl-alpha-D-muramoyl-L-alanyl-D-glutamate binding. 113–119 (GTNGKTT) contributes to the ATP binding site. Residues 155–156 (TT), serine 182, and arginine 190 contribute to the UDP-N-acetyl-alpha-D-muramoyl-L-alanyl-D-glutamate site. Lysine 222 is modified (N6-carboxylysine). Meso-2,6-diaminopimelate-binding positions include arginine 381, 405–408 (DNPR), glycine 455, and glutamate 459. Residues 405–408 (DNPR) carry the Meso-diaminopimelate recognition motif motif.

This sequence belongs to the MurCDEF family. MurE subfamily. Mg(2+) serves as cofactor. Carboxylation is probably crucial for Mg(2+) binding and, consequently, for the gamma-phosphate positioning of ATP.

It is found in the cytoplasm. It catalyses the reaction UDP-N-acetyl-alpha-D-muramoyl-L-alanyl-D-glutamate + meso-2,6-diaminopimelate + ATP = UDP-N-acetyl-alpha-D-muramoyl-L-alanyl-gamma-D-glutamyl-meso-2,6-diaminopimelate + ADP + phosphate + H(+). It functions in the pathway cell wall biogenesis; peptidoglycan biosynthesis. Functionally, catalyzes the addition of meso-diaminopimelic acid to the nucleotide precursor UDP-N-acetylmuramoyl-L-alanyl-D-glutamate (UMAG) in the biosynthesis of bacterial cell-wall peptidoglycan. The protein is UDP-N-acetylmuramoyl-L-alanyl-D-glutamate--2,6-diaminopimelate ligase of Clostridium tetani (strain Massachusetts / E88).